The primary structure comprises 109 residues: Cell division protein ZapA (109 aa).

The stretch at 21–99 forms a coiled coil; it reads PEQQEALNQA…IEQALLEQGK (79 aa).

The protein belongs to the ZapA family. Type 1 subfamily. Homodimer. Interacts with FtsZ.

Its subcellular location is the cytoplasm. Its function is as follows. Activator of cell division through the inhibition of FtsZ GTPase activity, therefore promoting FtsZ assembly into bundles of protofilaments necessary for the formation of the division Z ring. It is recruited early at mid-cell but it is not essential for cell division. The sequence is that of Cell division protein ZapA from Pectobacterium atrosepticum (strain SCRI 1043 / ATCC BAA-672) (Erwinia carotovora subsp. atroseptica).